Consider the following 126-residue polypeptide: Anti-adapter protein IraD (126 aa).

This sequence belongs to the GpW/Gp25 family. IraD subfamily. In terms of assembly, interacts with RssB.

The protein resides in the cytoplasm. Its function is as follows. Inhibits RpoS proteolysis by regulating RssB activity, thereby increasing the stability of the sigma stress factor RpoS during oxidative stress. Its effect on RpoS stability is due to its interaction with RssB, which probably blocks the interaction of RssB with RpoS, and the consequent delivery of the RssB-RpoS complex to the ClpXP protein degradation pathway. The polypeptide is Anti-adapter protein IraD (Salmonella enteritidis PT4 (strain P125109)).